The sequence spans 392 residues: Phospho-N-acetylmuramoyl-pentapeptide-transferase (392 aa).

Helical transmembrane passes span 29–49, 76–96, 100–120, 137–157, 193–213, 225–245, 262–282, 289–309, 314–334, and 369–389; these read AVMAALTALLIGLLAGPFVIR, TMGGVLILMSIGISTLLWFDL, FVWIVLLVTLGFGAIGWADDW, YLWQSLIGLVAALYLVFSISE, ISYPLGVFGFVILTYLVIVGS, GLAIMPVVMVGSALGVFAYVT, SGELLIFCSAMAGAGLAFLWF, VFMGDVGALALGAALGTIAVI, IVLAIMGGIFVVEALSVMMQV, and QVVVRFWIITMLLCLVGLSTL.

This sequence belongs to the glycosyltransferase 4 family. MraY subfamily. Mg(2+) serves as cofactor.

The protein localises to the cell inner membrane. The catalysed reaction is UDP-N-acetyl-alpha-D-muramoyl-L-alanyl-gamma-D-glutamyl-meso-2,6-diaminopimeloyl-D-alanyl-D-alanine + di-trans,octa-cis-undecaprenyl phosphate = di-trans,octa-cis-undecaprenyl diphospho-N-acetyl-alpha-D-muramoyl-L-alanyl-D-glutamyl-meso-2,6-diaminopimeloyl-D-alanyl-D-alanine + UMP. The protein operates within cell wall biogenesis; peptidoglycan biosynthesis. Catalyzes the initial step of the lipid cycle reactions in the biosynthesis of the cell wall peptidoglycan: transfers peptidoglycan precursor phospho-MurNAc-pentapeptide from UDP-MurNAc-pentapeptide onto the lipid carrier undecaprenyl phosphate, yielding undecaprenyl-pyrophosphoryl-MurNAc-pentapeptide, known as lipid I. This is Phospho-N-acetylmuramoyl-pentapeptide-transferase from Polaromonas sp. (strain JS666 / ATCC BAA-500).